The sequence spans 789 residues: Bifunctional purine biosynthetic protein PUR2,5 (789 aa).

Residues 1–428 form a GARS region; sequence MEKINVLVVG…NRTDIAHRAF (428 aa). The ATP-grasp domain maps to 114 to 321; sequence KDFMKKHNIP…LLELMLATVE (208 aa). Residue 140 to 201 participates in ATP binding; it reads IANSSHNLVI…EEFLEGDELS (62 aa). Mg(2+) is bound by residues E291 and N293. The segment at 438 to 773 is AIRS; that stretch reads LTYEDAGVSV…TVYTIGKLVE (336 aa).

This sequence in the N-terminal section; belongs to the GARS family. In the C-terminal section; belongs to the AIR synthase family. The cofactor is Mg(2+). Requires Mn(2+) as cofactor.

It is found in the cytoplasm. The protein resides in the cytosol. It carries out the reaction 2-formamido-N(1)-(5-O-phospho-beta-D-ribosyl)acetamidine + ATP = 5-amino-1-(5-phospho-beta-D-ribosyl)imidazole + ADP + phosphate + H(+). The enzyme catalyses 5-phospho-beta-D-ribosylamine + glycine + ATP = N(1)-(5-phospho-beta-D-ribosyl)glycinamide + ADP + phosphate + H(+). It participates in purine metabolism; IMP biosynthesis via de novo pathway; 5-amino-1-(5-phospho-D-ribosyl)imidazole from N(2)-formyl-N(1)-(5-phospho-D-ribosyl)glycinamide: step 2/2. Its pathway is purine metabolism; IMP biosynthesis via de novo pathway; N(1)-(5-phospho-D-ribosyl)glycinamide from 5-phospho-alpha-D-ribose 1-diphosphate: step 2/2. Its function is as follows. Catalyzes the second and fifth step in the 'de novo' purine biosynthesis pathway; contains phosphoribosylamine--glycine ligase (GARS) and phosphoribosylformylglycinamidine cyclo-ligase (AIRS) activities. The sequence is that of Bifunctional purine biosynthetic protein PUR2,5 from Pichia angusta (Yeast).